The primary structure comprises 422 residues: 4-hydroxy-3-methylbut-2-en-1-yl diphosphate synthase (flavodoxin) (422 aa).

[4Fe-4S] cluster-binding residues include C316, C319, C362, and E369.

Belongs to the IspG family. The cofactor is [4Fe-4S] cluster.

The catalysed reaction is (2E)-4-hydroxy-3-methylbut-2-enyl diphosphate + oxidized [flavodoxin] + H2O + 2 H(+) = 2-C-methyl-D-erythritol 2,4-cyclic diphosphate + reduced [flavodoxin]. It functions in the pathway isoprenoid biosynthesis; isopentenyl diphosphate biosynthesis via DXP pathway; isopentenyl diphosphate from 1-deoxy-D-xylulose 5-phosphate: step 5/6. Functionally, converts 2C-methyl-D-erythritol 2,4-cyclodiphosphate (ME-2,4cPP) into 1-hydroxy-2-methyl-2-(E)-butenyl 4-diphosphate. The sequence is that of 4-hydroxy-3-methylbut-2-en-1-yl diphosphate synthase (flavodoxin) from Anaplasma marginale (strain St. Maries).